The primary structure comprises 627 residues: Hemocyanin D chain (627 aa).

The Cu cation site is built by H171, H175, H202, H322, H326, and H362. N-linked (GlcNAc...) asparagine glycosylation occurs at N445. Residues C531 and C579 are joined by a disulfide bond.

Belongs to the tyrosinase family. Hemocyanin subfamily. In terms of assembly, tarantula hemocyanin is a 24-chain polymer with seven different chains identified. In terms of tissue distribution, hemolymph.

It is found in the secreted. The protein resides in the extracellular space. Its function is as follows. Hemocyanins are copper-containing oxygen carriers occurring freely dissolved in the hemolymph of many mollusks and arthropods. This chain is Hemocyanin D chain (HCD), found in Aphonopelma sp. (American tarantula).